A 208-amino-acid chain; its full sequence is Protein-L-isoaspartate O-methyltransferase (208 aa).

The active site involves Ser-59.

It belongs to the methyltransferase superfamily. L-isoaspartyl/D-aspartyl protein methyltransferase family.

The protein localises to the cytoplasm. The catalysed reaction is [protein]-L-isoaspartate + S-adenosyl-L-methionine = [protein]-L-isoaspartate alpha-methyl ester + S-adenosyl-L-homocysteine. In terms of biological role, catalyzes the methyl esterification of L-isoaspartyl residues in peptides and proteins that result from spontaneous decomposition of normal L-aspartyl and L-asparaginyl residues. It plays a role in the repair and/or degradation of damaged proteins. This chain is Protein-L-isoaspartate O-methyltransferase, found in Vibrio parahaemolyticus serotype O3:K6 (strain RIMD 2210633).